Here is a 145-residue protein sequence, read N- to C-terminus: Ribosome maturation factor RimP (145 aa).

The protein belongs to the RimP family.

It is found in the cytoplasm. Required for maturation of 30S ribosomal subunits. The sequence is that of Ribosome maturation factor RimP from Borreliella afzelii (strain PKo) (Borrelia afzelii).